The primary structure comprises 477 residues: Glutamyl-tRNA(Gln) amidotransferase subunit A (477 aa).

Active-site charge relay system residues include Lys-76 and Ser-151. Ser-175 serves as the catalytic Acyl-ester intermediate.

Belongs to the amidase family. GatA subfamily. Heterotrimer of A, B and C subunits.

The enzyme catalyses L-glutamyl-tRNA(Gln) + L-glutamine + ATP + H2O = L-glutaminyl-tRNA(Gln) + L-glutamate + ADP + phosphate + H(+). In terms of biological role, allows the formation of correctly charged Gln-tRNA(Gln) through the transamidation of misacylated Glu-tRNA(Gln) in organisms which lack glutaminyl-tRNA synthetase. The reaction takes place in the presence of glutamine and ATP through an activated gamma-phospho-Glu-tRNA(Gln). The sequence is that of Glutamyl-tRNA(Gln) amidotransferase subunit A from Chlorobium phaeobacteroides (strain BS1).